The chain runs to 199 residues: NAD(P)H quinone oxidoreductase PST3 (199 aa).

Residues 5–193 form the Flavodoxin-like domain; that stretch reads VAIIIYSLYH…EIAFIQGKSF (189 aa). FMN contacts are provided by residues 11-15 and 111-165; these read SLYHH and IFVS…SPYG.

It belongs to the WrbA family. The cofactor is FMN.

Its subcellular location is the cell membrane. The enzyme catalyses a quinone + NADH + H(+) = a quinol + NAD(+). It carries out the reaction a quinone + NADPH + H(+) = a quinol + NADP(+). Its function is as follows. Flavodoxin-like protein (FLP) that plays a role in cell wall integrity, oxidative stress protection and virulence. FLPs act as NAD(P)H quinone oxidoreductases. Reduces ubiquinone (coenzyme Q), enabling it to serve as an antioxidant in the membrane. The sequence is that of NAD(P)H quinone oxidoreductase PST3 from Candida albicans (strain SC5314 / ATCC MYA-2876) (Yeast).